A 327-amino-acid polypeptide reads, in one-letter code: Phenylalanine--tRNA ligase alpha subunit (327 aa).

Glutamate 252 provides a ligand contact to Mg(2+).

This sequence belongs to the class-II aminoacyl-tRNA synthetase family. Phe-tRNA synthetase alpha subunit type 1 subfamily. As to quaternary structure, tetramer of two alpha and two beta subunits. It depends on Mg(2+) as a cofactor.

The protein resides in the cytoplasm. It carries out the reaction tRNA(Phe) + L-phenylalanine + ATP = L-phenylalanyl-tRNA(Phe) + AMP + diphosphate + H(+). This is Phenylalanine--tRNA ligase alpha subunit from Photobacterium profundum (strain SS9).